Reading from the N-terminus, the 375-residue chain is All-trans-retinol dehydrogenase [NAD(+)] ADH1B (375 aa).

Serine 2 bears the N-acetylserine mark. Residue serine 23 is modified to Phosphoserine. Tyrosine 35 bears the Phosphotyrosine mark. Cysteine 47, histidine 68, cysteine 98, cysteine 101, cysteine 104, cysteine 112, and cysteine 175 together coordinate Zn(2+). NAD(+) is bound by residues 200 to 205, aspartate 224, lysine 229, 293 to 295, and arginine 370; these read GLGGVG and VGV.

Belongs to the zinc-containing alcohol dehydrogenase family. In terms of assembly, dimer of identical or non-identical chains of three types; alpha, beta and gamma. Zn(2+) is required as a cofactor.

It localises to the cytoplasm. It catalyses the reaction all-trans-retinol + NAD(+) = all-trans-retinal + NADH + H(+). It carries out the reaction all-trans-4-hydroxyretinol + NAD(+) = all-trans-4-hydroxyretinal + NADH + H(+). The catalysed reaction is all-trans-4-oxoretinol + NAD(+) = all-trans-4-oxoretinal + NADH + H(+). In terms of biological role, catalyzes the NAD-dependent oxidation of all-trans-retinol and its derivatives such as all-trans-4-hydroxyretinol and may participate in retinoid metabolism. In vitro can also catalyze the NADH-dependent reduction of all-trans-retinal and its derivatives such as all-trans-4-oxoretinal. Catalyzes in the oxidative direction with higher efficiency. Has the same affinity for all-trans-4-hydroxyretinol and all-trans-4-oxoretinal. This chain is All-trans-retinol dehydrogenase [NAD(+)] ADH1B, found in Homo sapiens (Human).